Reading from the N-terminus, the 509-residue chain is tRNA (guanine(37)-N(1))-methyltransferase (509 aa).

The N-terminal 57 residues, Met1 to Phe57, are a transit peptide targeting the mitochondrion. S-adenosyl-L-methionine-binding positions include His289, Asp327–Leu328, Asp355–Gly356, and Asn387. A disordered region spans residues Thr478–Thr509.

This sequence belongs to the class I-like SAM-binding methyltransferase superfamily. TRM5/TYW2 family. In terms of assembly, monomer.

The protein resides in the mitochondrion matrix. It is found in the nucleus. The protein localises to the cytoplasm. It catalyses the reaction guanosine(37) in tRNA + S-adenosyl-L-methionine = N(1)-methylguanosine(37) in tRNA + S-adenosyl-L-homocysteine + H(+). Functionally, involved in mitochondrial tRNA methylation. Specifically methylates the N1 position of guanosine-37 in various tRNAs. Methylation is not dependent on the nature of the nucleoside 5' of the target nucleoside. This is the first step in the biosynthesis of wybutosine (yW), a modified base adjacent to the anticodon of tRNAs and required for accurate decoding. The protein is tRNA (guanine(37)-N(1))-methyltransferase of Macaca fascicularis (Crab-eating macaque).